Consider the following 264-residue polypeptide: E3 ubiquitin-protein ligase MARCHF8 (264 aa).

Positions 15 to 47 are disordered; the sequence is LGHSVSRSSNISKAGSPTSVSAPSSFPRTSVTP. The span at 17–47 shows a compositional bias: polar residues; the sequence is HSVSRSSNISKAGSPTSVSAPSSFPRTSVTP. The segment at 45 to 106 adopts an RING-CH-type zinc-finger fold; sequence VTPSSQDICR…ELCKFEFIME (62 aa). Zn(2+)-binding residues include Cys53, Cys56, Cys70, Cys72, His80, Cys83, Cys96, and Cys99. 2 helical membrane-spanning segments follow: residues 130–150 and 170–190; these read CSVT…YVLI and FWTK…FMYV.

It localises to the cytoplasmic vesicle membrane. It is found in the lysosome membrane. The protein resides in the early endosome membrane. The enzyme catalyses S-ubiquitinyl-[E2 ubiquitin-conjugating enzyme]-L-cysteine + [acceptor protein]-L-lysine = [E2 ubiquitin-conjugating enzyme]-L-cysteine + N(6)-ubiquitinyl-[acceptor protein]-L-lysine.. It functions in the pathway protein modification; protein ubiquitination. In terms of biological role, E3 ubiquitin-protein ligase that mediates ubiquitination of cd86 and MHC class II proteins, such as hla-dr alpha and beta, and promotes their subsequent endocytosis and sorting to lysosomes via multivesicular bodies. This is E3 ubiquitin-protein ligase MARCHF8 (marchf8) from Xenopus tropicalis (Western clawed frog).